Consider the following 62-residue polypeptide: MAKRCALTFKGPMVGNHVSHANNKNKRRLLPNLRSIKIQLDDGTTKRIKVAASTLRTMRKGA.

This sequence belongs to the bacterial ribosomal protein bL28 family.

The sequence is that of Large ribosomal subunit protein bL28 from Helicobacter pylori (strain Shi470).